Consider the following 20-residue polypeptide: IVPFLLGMVPKLVCLITKKC.

Methionine sulfoxide; partial is present on methionine 8. A disulfide bridge links cysteine 14 with cysteine 20.

The protein belongs to the frog skin active peptide (FSAP) family. Brevinin subfamily. As to expression, expressed by the skin glands.

The protein localises to the secreted. In terms of biological role, antimicrobial peptide active against Gram-positive bacterium S.epidermidis ATCC 12228 (MIC=4 uM), against Gram-negative bacterium E.coli ATCC 25922 (MIC=64 uM) and against yeast C.parapsilosis ATCC 22019 (MIC=16 uM). Has hemolytic and cytotoxic activity. This chain is Brevinin-1ITa, found in Rana italica (Italian stream frog).